Here is a 96-residue protein sequence, read N- to C-terminus: uncharacterized protein (96 aa).

This is an uncharacterized protein from Bacillus subtilis (strain 168).